The following is a 221-amino-acid chain: GTP-binding nuclear protein Ran2 (221 aa).

A Small GTPase Ran-type domain is found at aspartate 10 to aspartate 174. Position 21-28 (aspartate 21–threonine 28) interacts with GTP. Positions lysine 40 to valine 48 are switch-I. GTP contacts are provided by residues glycine 71, asparagine 125–aspartate 128, and serine 153–lysine 155. Residues glycine 71–glutamine 87 form a switch-II region.

Belongs to the small GTPase superfamily. Ran family. Found in a nuclear export complex with RanGTP, exportin and pre-miRNA.

It localises to the nucleus. GTP-binding protein involved in nucleocytoplasmic transport. Required for the import of protein into the nucleus and also for RNA export. Involved in chromatin condensation and control of cell cycle. The sequence is that of GTP-binding nuclear protein Ran2 (RAN2) from Solanum lycopersicum (Tomato).